Reading from the N-terminus, the 368-residue chain is tRNA-specific 2-thiouridylase MnmA (368 aa).

ATP contacts are provided by residues 11-18 (GMSGGVDS) and methionine 37. The interaction with target base in tRNA stretch occupies residues 97-99 (NPD). The active-site Nucleophile is cysteine 102. Cysteine 102 and cysteine 199 are disulfide-bonded. Glycine 127 contacts ATP. Positions 149–151 (KDQ) are interaction with tRNA. The Cysteine persulfide intermediate role is filled by cysteine 199. The interaction with tRNA stretch occupies residues 311–312 (RY).

The protein belongs to the MnmA/TRMU family. As to quaternary structure, interacts with TusE.

It localises to the cytoplasm. It carries out the reaction S-sulfanyl-L-cysteinyl-[protein] + uridine(34) in tRNA + AH2 + ATP = 2-thiouridine(34) in tRNA + L-cysteinyl-[protein] + A + AMP + diphosphate + H(+). In terms of biological role, catalyzes the 2-thiolation of uridine at the wobble position (U34) of tRNA(Lys), tRNA(Glu) and tRNA(Gln), leading to the formation of s(2)U34, the first step of tRNA-mnm(5)s(2)U34 synthesis. Sulfur is provided by IscS, via a sulfur-relay system. Binds ATP and its substrate tRNAs. The sequence is that of tRNA-specific 2-thiouridylase MnmA from Shigella flexneri serotype 5b (strain 8401).